A 217-amino-acid chain; its full sequence is Oxygen-evolving enhancer protein 3, chloroplastic (217 aa).

2 disordered regions span residues M1–G25 and P73–A95. A chloroplast-targeting transit peptide spans M1–A63.

Belongs to the PsbQ family.

It localises to the plastid. It is found in the chloroplast thylakoid membrane. The chain is Oxygen-evolving enhancer protein 3, chloroplastic from Oryza sativa subsp. indica (Rice).